The sequence spans 320 residues: SUN domain-containing protein 3 (320 aa).

Over 1-6 (MLTRSW) the chain is Nuclear. The helical transmembrane segment at 7-29 (KIILSTVFISTFLLVGLLNHQWL) threads the bilayer. The Perinuclear space portion of the chain corresponds to 30-320 (KETEFPQKPR…RVHGIPSDYT (291 aa)). A coiled-coil region spans residues 63–102 (KEQQELLKKESQTLENNFREILFLIEQIDVLKALLKDMKD). The 162-residue stretch at 156–317 (GASVIEAGTS…YRFRVHGIPS (162 aa)) folds into the SUN domain.

As to quaternary structure, self-associates. Interacts with SYNE1 and SPAG4/SUN4. Proposed to form a spermatogenesis-specific LINC complex with SYNE1 during sperm head formation possibly implicating a SUN domain-based heterotrimer with SPAG4/SUN4 associating with SYNE1. Can interact with SYNE3; the interaction is questioned by missing colocalization in spermatids. As to expression, specifically expressed in testis (at protein level).

Its subcellular location is the membrane. The protein localises to the nucleus envelope. It localises to the nucleus inner membrane. In terms of biological role, as a probable component of the LINC (LInker of Nucleoskeleton and Cytoskeleton) complex, involved in the connection between the nuclear lamina and the cytoskeleton. The nucleocytoplasmic interactions established by the LINC complex play an important role in the transmission of mechanical forces across the nuclear envelope and in nuclear movement and positioning. May be involved in nuclear remodeling during sperm head formation in spermatogenesis. A probable SUN3:SYNE1 LINC complex may tether spermatid nuclei to posterior cytoskeletal structures such as the manchette. The chain is SUN domain-containing protein 3 (Sun3) from Mus musculus (Mouse).